The primary structure comprises 116 residues: Large ribosomal subunit protein uL18 (116 aa).

It belongs to the universal ribosomal protein uL18 family. As to quaternary structure, part of the 50S ribosomal subunit; part of the 5S rRNA/L5/L18/L25 subcomplex. Contacts the 5S and 23S rRNAs.

Its function is as follows. This is one of the proteins that bind and probably mediate the attachment of the 5S RNA into the large ribosomal subunit, where it forms part of the central protuberance. The sequence is that of Large ribosomal subunit protein uL18 from Pseudomonas fluorescens (strain ATCC BAA-477 / NRRL B-23932 / Pf-5).